The following is a 223-amino-acid chain: UPF0502 protein Sde_2426 (223 aa).

Belongs to the UPF0502 family.

The chain is UPF0502 protein Sde_2426 from Saccharophagus degradans (strain 2-40 / ATCC 43961 / DSM 17024).